Consider the following 491-residue polypeptide: N-succinylglutamate 5-semialdehyde dehydrogenase (491 aa).

NAD(+) is bound at residue 225–230; that stretch reads GSSTVG. Residues glutamate 248 and cysteine 282 contribute to the active site.

It belongs to the aldehyde dehydrogenase family. AstD subfamily.

It catalyses the reaction N-succinyl-L-glutamate 5-semialdehyde + NAD(+) + H2O = N-succinyl-L-glutamate + NADH + 2 H(+). Its pathway is amino-acid degradation; L-arginine degradation via AST pathway; L-glutamate and succinate from L-arginine: step 4/5. Functionally, catalyzes the NAD-dependent reduction of succinylglutamate semialdehyde into succinylglutamate. This Marinobacter nauticus (strain ATCC 700491 / DSM 11845 / VT8) (Marinobacter aquaeolei) protein is N-succinylglutamate 5-semialdehyde dehydrogenase.